The sequence spans 570 residues: Glucan 1,3-beta-glucosidase 2 (570 aa).

N91, N116, N121, N184, N203, and N248 each carry an N-linked (GlcNAc...) asparagine glycan. Residue E338 is the Proton donor of the active site. N-linked (GlcNAc...) asparagine glycosylation occurs at N364. E439 functions as the Nucleophile in the catalytic mechanism. N525 and N552 each carry an N-linked (GlcNAc...) asparagine glycan.

This sequence belongs to the glycosyl hydrolase 5 (cellulase A) family.

The protein localises to the secreted. It carries out the reaction Successive hydrolysis of beta-D-glucose units from the non-reducing ends of (1-&gt;3)-beta-D-glucans, releasing alpha-glucose.. This Schizosaccharomyces pombe (strain 972 / ATCC 24843) (Fission yeast) protein is Glucan 1,3-beta-glucosidase 2 (exg2).